Reading from the N-terminus, the 177-residue chain is PLAC8-like protein 1 (177 aa).

The protein belongs to the cornifelin family.

The protein is PLAC8-like protein 1 (Plac8l1) of Mus musculus (Mouse).